The chain runs to 30 residues: Dermonecrotic toxin LlSicTox-alphaIII-1 (30 aa).

H12 is a catalytic residue.

It belongs to the arthropod phospholipase D family. Class I subfamily. Mg(2+) is required as a cofactor. In terms of processing, contains 1 disulfide bond. As to expression, expressed by the venom gland.

The protein resides in the secreted. The catalysed reaction is an N-(acyl)-sphingosylphosphocholine = an N-(acyl)-sphingosyl-1,3-cyclic phosphate + choline. It catalyses the reaction an N-(acyl)-sphingosylphosphoethanolamine = an N-(acyl)-sphingosyl-1,3-cyclic phosphate + ethanolamine. It carries out the reaction a 1-acyl-sn-glycero-3-phosphocholine = a 1-acyl-sn-glycero-2,3-cyclic phosphate + choline. The enzyme catalyses a 1-acyl-sn-glycero-3-phosphoethanolamine = a 1-acyl-sn-glycero-2,3-cyclic phosphate + ethanolamine. In terms of biological role, dermonecrotic toxins cleave the phosphodiester linkage between the phosphate and headgroup of certain phospholipids (sphingolipid and lysolipid substrates), forming an alcohol (often choline) and a cyclic phosphate. This toxin acts on sphingomyelin (SM). It may also act on ceramide phosphoethanolamine (CPE), lysophosphatidylcholine (LPC) and lysophosphatidylethanolamine (LPE), but not on lysophosphatidylserine (LPS), and lysophosphatidylglycerol (LPG). It acts by transphosphatidylation, releasing exclusively cyclic phosphate products as second products. In vivo, intradermal injection induces dermonecrosis. Induces hemolysis, increased vascular permeability, edema, inflammatory response, and platelet aggregation. This chain is Dermonecrotic toxin LlSicTox-alphaIII-1, found in Loxosceles laeta (South American recluse spider).